Reading from the N-terminus, the 517-residue chain is Ribose import ATP-binding protein RbsA 2 (517 aa).

ABC transporter domains are found at residues 11–251 (LEMR…VGRD) and 263–507 (YDPG…ALAT). 43-50 (GENGAGKS) is an ATP binding site.

The protein belongs to the ABC transporter superfamily. Ribose importer (TC 3.A.1.2.1) family. In terms of assembly, the complex is composed of an ATP-binding protein (RbsA), two transmembrane proteins (RbsC) and a solute-binding protein (RbsB).

It is found in the cell inner membrane. The catalysed reaction is D-ribose(out) + ATP + H2O = D-ribose(in) + ADP + phosphate + H(+). In terms of biological role, part of the ABC transporter complex RbsABC involved in ribose import. Responsible for energy coupling to the transport system. This chain is Ribose import ATP-binding protein RbsA 2, found in Burkholderia pseudomallei (strain 1710b).